We begin with the raw amino-acid sequence, 816 residues long: Phosphatidylinositol 4-kinase beta (816 aa).

3 disordered regions span residues 1 to 30 (MGDT…GSLL), 101 to 120 (EDEM…RRRR), and 248 to 318 (AHRK…SFSS). N-acetylglycine is present on glycine 2. The interaction with ACBD3 stretch occupies residues 2 to 68 (GDTIVEPAPL…VKLLHGGVAI (67 aa)). The 214-residue stretch at 29-242 (LLSVITEGVG…GTKLRKLILS (214 aa)) folds into the PIK helical domain. The residue at position 258 (serine 258) is a Phosphoserine. Threonine 263 carries the post-translational modification Phosphothreonine. Phosphoserine occurs at positions 266, 275, 277, 284, and 294. Composition is skewed to polar residues over residues 278–297 (DATA…SNPK) and 306–318 (SSST…SFSS). Serine 428 is modified (phosphoserine). A Phosphothreonine modification is found at threonine 438. Serine 511 bears the Phosphoserine mark. Phosphothreonine occurs at positions 517 and 519. The region spanning 535-801 (EPWQEKVRRI…MVDGSMRSIT (267 aa)) is the PI3K/PI4K catalytic domain. The interval 541 to 547 (VRRIREG) is G-loop. The catalytic loop stretch occupies residues 668–676 (QVKDRHNGN). An activation loop region spans residues 687-711 (HIDFGFILSSSPRNLGFETSAFKLT).

The protein belongs to the PI3/PI4-kinase family. Type III PI4K subfamily. In terms of assembly, interacts with ARF1 and ARF3 in the Golgi complex, but not with ARF4, ARF5 or ARF6. Interacts with NCS1/FREQ in a calcium-independent manner. Interacts with CALN1/CABP8 and CALN2/CABP7; in a calcium-dependent manner; this interaction competes with NCS1/FREQ binding. Interacts with ACBD3. Interacts with ARMH3, YWHAB, YWHAE, YWHAG, YWHAH, YWHAQ, YWHAZ and SFN. Interacts with GGA2 (via VHS domain); the interaction is important for PI4KB location at the Golgi apparatus membrane. Interacts with ATG9A. Requires Mg(2+) as cofactor. Mn(2+) is required as a cofactor.

It localises to the endomembrane system. Its subcellular location is the mitochondrion outer membrane. The protein resides in the rough endoplasmic reticulum membrane. The protein localises to the golgi apparatus. It is found in the golgi apparatus membrane. The catalysed reaction is a 1,2-diacyl-sn-glycero-3-phospho-(1D-myo-inositol) + ATP = a 1,2-diacyl-sn-glycero-3-phospho-(1D-myo-inositol 4-phosphate) + ADP + H(+). Inhibited by wortmannin. Increased kinase activity upon interaction with NCS1/FREQ. Its function is as follows. Phosphorylates phosphatidylinositol (PI) in the first committed step in the production of the second messenger inositol-1,4,5,-trisphosphate (PIP). May regulate Golgi disintegration/reorganization during mitosis, possibly via its phosphorylation. Involved in Golgi-to-plasma membrane trafficking. This Bos taurus (Bovine) protein is Phosphatidylinositol 4-kinase beta (PI4KB).